The primary structure comprises 259 residues: MSGGGGKDRIAVFPSRMAQTLMKTRLKGAQKGHSLLKKKADALNLRFRDILKKIVENKVLMGEVMKEAAFSLAEAKFTAGDFSHTVIQNVSQAQYRVRMKKENVVGVLLPVFDAYQDGPDAYDLTGLGKGGANIARLKKNYNKAIELLVELATLQTCFITLDEAIKVTNRRVNAIEHVIIPRIENTLTYIVTELDEMEREEFFRMKKIQANKKKLKEQEAAQRALEGPPKEEAGGTHSENQPPRNLLAVEEDNLPVLFN.

Residues 214 to 259 (KLKEQEAAQRALEGPPKEEAGGTHSENQPPRNLLAVEEDNLPVLFN) form a disordered region.

Belongs to the V-ATPase D subunit family. V-ATPase is a heteromultimeric enzyme made up of two complexes: the ATP-hydrolytic V1 complex and the proton translocation V0 complex. The V1 complex consists of three catalytic AB heterodimers that form a heterohexamer, three peripheral stalks each consisting of EG heterodimers, one central rotor including subunits D and F, and the regulatory subunits C and H. The proton translocation complex V0 consists of the proton transport subunit a, a ring of proteolipid subunits c9c'', rotary subunit d, and The proton translocation complex V0 consists of the proton transport subunit a, a ring of proteolipid subunits c9c'', rotary subunit d, subunits e and f, and the accessory subunits vah-19/Ac45 and vah-20/PRR.

Its function is as follows. Subunit of the V1 complex of vacuolar(H+)-ATPase (V-ATPase), a multisubunit enzyme composed of a peripheral complex (V1) that hydrolyzes ATP and a membrane integral complex (V0) that translocates protons. V-ATPase is responsible for acidifying and maintaining the pH of intracellular compartments and in some cell types, is targeted to the plasma membrane, where it is responsible for acidifying the extracellular environment. The polypeptide is V-type proton ATPase subunit D (Caenorhabditis briggsae).